We begin with the raw amino-acid sequence, 258 residues long: Small ribosomal subunit protein mS23 (258 aa).

The segment covering 230 to 239 (KKNSTKQSWA) has biased composition (polar residues). A disordered region spans residues 230-258 (KKNSTKQSWAEATEEKEEQDSAEPEELKL). Positions 241-258 (ATEEKEEQDSAEPEELKL) are enriched in acidic residues.

This sequence belongs to the mitochondrion-specific ribosomal protein mS23 family. Component of the mitochondrial small ribosomal subunit.

Its subcellular location is the mitochondrion. The polypeptide is Small ribosomal subunit protein mS23 (RSM25) (Eremothecium gossypii (strain ATCC 10895 / CBS 109.51 / FGSC 9923 / NRRL Y-1056) (Yeast)).